A 560-amino-acid polypeptide reads, in one-letter code: Ubiquitin carboxyl-terminal hydrolase MINDY-3 homolog (560 aa).

Residues 1–13 are compositionally biased toward basic and acidic residues; sequence MNEKIVREQRGGE. 2 disordered regions span residues 1–30 and 44–91; these read MNEK…AASA and SHKT…MLNA. Composition is skewed to low complexity over residues 15–30 and 52–81; these read SPSS…AASA and TASS…SSSS. C139 (nucleophile) is an active-site residue. The disordered stretch occupies residues 203–237; sequence TEAGSTKKRSPAGEEESALAGQAAGSSEEVEEAAE. Phosphoserine is present on residues S212 and S219. The active-site Proton acceptor is H403.

The protein belongs to the MINDY deubiquitinase family. FAM188 subfamily.

The enzyme catalyses Thiol-dependent hydrolysis of ester, thioester, amide, peptide and isopeptide bonds formed by the C-terminal Gly of ubiquitin (a 76-residue protein attached to proteins as an intracellular targeting signal).. In terms of biological role, hydrolase that can remove 'Lys-48'-linked conjugated ubiquitin from proteins. In Drosophila melanogaster (Fruit fly), this protein is Ubiquitin carboxyl-terminal hydrolase MINDY-3 homolog (mindy3).